The sequence spans 150 residues: Large ribosomal subunit protein uL15 (150 aa).

This sequence belongs to the universal ribosomal protein uL15 family. In terms of assembly, part of the 50S ribosomal subunit.

In terms of biological role, binds to the 23S rRNA. The protein is Large ribosomal subunit protein uL15 of Rickettsia prowazekii (strain Madrid E).